The following is a 281-amino-acid chain: Ribosomal RNA small subunit methyltransferase I (281 aa).

Belongs to the methyltransferase superfamily. RsmI family.

Its subcellular location is the cytoplasm. It carries out the reaction cytidine(1402) in 16S rRNA + S-adenosyl-L-methionine = 2'-O-methylcytidine(1402) in 16S rRNA + S-adenosyl-L-homocysteine + H(+). In terms of biological role, catalyzes the 2'-O-methylation of the ribose of cytidine 1402 (C1402) in 16S rRNA. The sequence is that of Ribosomal RNA small subunit methyltransferase I from Pasteurella multocida (strain Pm70).